The primary structure comprises 352 residues: Phenylalanine--tRNA ligase alpha subunit (352 aa).

Residue E258 participates in Mg(2+) binding.

Belongs to the class-II aminoacyl-tRNA synthetase family. Phe-tRNA synthetase alpha subunit type 1 subfamily. In terms of assembly, tetramer of two alpha and two beta subunits. Mg(2+) serves as cofactor.

The protein localises to the cytoplasm. It carries out the reaction tRNA(Phe) + L-phenylalanine + ATP = L-phenylalanyl-tRNA(Phe) + AMP + diphosphate + H(+). This is Phenylalanine--tRNA ligase alpha subunit from Staphylococcus carnosus (strain TM300).